A 396-amino-acid polypeptide reads, in one-letter code: Purple acid phosphatase 5 (396 aa).

The first 13 residues, Met1–Asn13, serve as a signal peptide directing secretion. The N-linked (GlcNAc...) asparagine glycan is linked to Asn58. Asp125 lines the Fe cation pocket. An N-linked (GlcNAc...) asparagine glycan is attached at Asn133. Asp153 and Tyr156 together coordinate Fe cation. A Zn(2+)-binding site is contributed by Asp153. Residue Asn190 coordinates Zn(2+). Asn190 lines the substrate pocket. A glycan (N-linked (GlcNAc...) asparagine) is linked at Asn238. His250 contacts Zn(2+). Catalysis depends on His260, which acts as the Proton donor. His287 contributes to the Zn(2+) binding site. His287–His289 is a binding site for substrate. A Fe cation-binding site is contributed by His289. 2 N-linked (GlcNAc...) asparagine glycosylation sites follow: Asn303 and Asn360.

This sequence belongs to the metallophosphoesterase superfamily. Purple acid phosphatase family. Homodimer. Requires Fe cation as cofactor. Zn(2+) is required as a cofactor.

The protein resides in the secreted. It catalyses the reaction a phosphate monoester + H2O = an alcohol + phosphate. In Arabidopsis thaliana (Mouse-ear cress), this protein is Purple acid phosphatase 5 (PAP5).